Reading from the N-terminus, the 156-residue chain is Rhodanese-like domain-containing protein 17 (156 aa).

Residues 44-146 (LDSGYTFLDV…WVNKRFPVKV (103 aa)) form the Rhodanese domain. Cys-106 serves as the catalytic Cysteine persulfide intermediate.

This chain is Rhodanese-like domain-containing protein 17 (STR17), found in Arabidopsis thaliana (Mouse-ear cress).